We begin with the raw amino-acid sequence, 339 residues long: Ketol-acid reductoisomerase (NADP(+)) (339 aa).

The KARI N-terminal Rossmann domain maps to 1-182 (MRVYYDSDAD…GGGRAGIIET (182 aa)). NADP(+) is bound by residues 24-27 (YGSQ), R48, S51, and 83-86 (DEGQ). Residue H108 is part of the active site. Residue G134 participates in NADP(+) binding. A KARI C-terminal knotted domain is found at 183–328 (TFKEECETDL…EKLRAMMPWI (146 aa)). Mg(2+) contacts are provided by D191, E195, E227, and E231. S252 serves as a coordination point for substrate.

The protein belongs to the ketol-acid reductoisomerase family. Requires Mg(2+) as cofactor.

The catalysed reaction is (2R)-2,3-dihydroxy-3-methylbutanoate + NADP(+) = (2S)-2-acetolactate + NADPH + H(+). It carries out the reaction (2R,3R)-2,3-dihydroxy-3-methylpentanoate + NADP(+) = (S)-2-ethyl-2-hydroxy-3-oxobutanoate + NADPH + H(+). It participates in amino-acid biosynthesis; L-isoleucine biosynthesis; L-isoleucine from 2-oxobutanoate: step 2/4. The protein operates within amino-acid biosynthesis; L-valine biosynthesis; L-valine from pyruvate: step 2/4. Involved in the biosynthesis of branched-chain amino acids (BCAA). Catalyzes an alkyl-migration followed by a ketol-acid reduction of (S)-2-acetolactate (S2AL) to yield (R)-2,3-dihydroxy-isovalerate. In the isomerase reaction, S2AL is rearranged via a Mg-dependent methyl migration to produce 3-hydroxy-3-methyl-2-ketobutyrate (HMKB). In the reductase reaction, this 2-ketoacid undergoes a metal-dependent reduction by NADPH to yield (R)-2,3-dihydroxy-isovalerate. The sequence is that of Ketol-acid reductoisomerase (NADP(+)) from Acidiphilium cryptum (strain JF-5).